The sequence spans 272 residues: MENFEVIKALFLGFVEGLTEFLPISSTGHLILFGHIIDFHSDGGRVFEVVIQLGAILAVCWLYRQKIINLIKGFFSGDVESRHFAISVLIAFFPAVIIGVLAVDFIKSVLFSPIVVAIALIVGALIIFWVESKQFEHKTDDATKITFKQALLVGLAQCVAMIPGTSRSGATIVGGMFAGLSRKAATEFSFFLAMPTMLGAATFDLIKNADVLTSDNMVNIGVGFVAAFIAALLVVKALVLFVERHTLRVFAWYRIVLGVIILIAAMFFNLSA.

The next 8 membrane-spanning stretches (helical) occupy residues 4-24 (FEVI…FLPI), 43-63 (GGRV…CWLY), 86-106 (ISVL…VDFI), 109-129 (VLFS…IIFW), 145-165 (ITFK…IPGT), 186-206 (TEFS…FDLI), 222-242 (VGFV…VLFV), and 249-269 (VFAW…MFFN).

Belongs to the UppP family.

Its subcellular location is the cell inner membrane. The catalysed reaction is di-trans,octa-cis-undecaprenyl diphosphate + H2O = di-trans,octa-cis-undecaprenyl phosphate + phosphate + H(+). Functionally, catalyzes the dephosphorylation of undecaprenyl diphosphate (UPP). Confers resistance to bacitracin. This Acinetobacter baumannii (strain SDF) protein is Undecaprenyl-diphosphatase.